A 499-amino-acid polypeptide reads, in one-letter code: Maturase K (499 aa).

Belongs to the intron maturase 2 family. MatK subfamily.

The protein resides in the plastid. The protein localises to the chloroplast. Functionally, usually encoded in the trnK tRNA gene intron. Probably assists in splicing its own and other chloroplast group II introns. The sequence is that of Maturase K from Ceratonia siliqua (Carob).